Reading from the N-terminus, the 366-residue chain is Apolipoprotein A-V (366 aa).

The signal sequence occupies residues 1–23 (MASMAAVLTWALALLSAFSATQA). Coiled-coil stretches lie at residues 54–157 (ATLK…VGED) and 236–262 (TLKA…RAFA). Residue threonine 55 is modified to Phosphothreonine; by FAM20C. At serine 59 the chain carries Phosphoserine.

It belongs to the apolipoprotein A1/A4/E family. As to quaternary structure, interacts with GPIHBP1. Interacts with SORL1; this interaction leads to APOA5 internalization and sorting either to lysosomes and degradation, or to the trans-Golgi network. In terms of processing, phosphorylated by FAM20C in the extracellular medium. In terms of tissue distribution, liver and plasma.

It is found in the secreted. The protein resides in the early endosome. The protein localises to the late endosome. Its subcellular location is the golgi apparatus. It localises to the trans-Golgi network. Minor apolipoprotein mainly associated with HDL and to a lesser extent with VLDL. May also be associated with chylomicrons. Important determinant of plasma triglyceride (TG) levels by both being a potent stimulator of apo-CII lipoprotein lipase (LPL) TG hydrolysis and an inhibitor of the hepatic VLDL-TG production rate (without affecting the VLDL-apoB production rate). Activates poorly lecithin:cholesterol acyltransferase (LCAT) and does not enhance efflux of cholesterol from macrophages. Binds heparin. The sequence is that of Apolipoprotein A-V (APOA5) from Homo sapiens (Human).